Reading from the N-terminus, the 339-residue chain is UDP-galactose transporter homolog 1 (339 aa).

9 helical membrane passes run 5-25 (ILKH…WGLL), 43-63 (VPYI…LIYI), 91-111 (AISA…TYML), 138-158 (LVVL…HKPS), 171-191 (SSLI…LTNA), 208-228 (HLMF…MVLV), 246-268 (ISRY…FYTL), 273-295 (SLVL…IIVY), and 301-321 (LWQW…SMGK).

It belongs to the nucleotide-sugar transporter family. SLC35B subfamily.

It localises to the endoplasmic reticulum membrane. Functionally, may be involved in specific transport of UDP-Gal from the cytosol to the Golgi lumen. Involved in the maintenance of optimal conditions for the folding of secretory pathway proteins in the endoplasmic reticulum. This chain is UDP-galactose transporter homolog 1 (HUT1), found in Kluyveromyces lactis (strain ATCC 8585 / CBS 2359 / DSM 70799 / NBRC 1267 / NRRL Y-1140 / WM37) (Yeast).